Consider the following 66-residue polypeptide: Large ribosomal subunit protein bL31 (66 aa).

Zn(2+) is bound by residues Cys16, Cys18, Cys36, and Cys39.

The protein belongs to the bacterial ribosomal protein bL31 family. Type A subfamily. Part of the 50S ribosomal subunit. It depends on Zn(2+) as a cofactor.

Binds the 23S rRNA. The sequence is that of Large ribosomal subunit protein bL31 from Geobacillus sp. (strain WCH70).